Reading from the N-terminus, the 1075-residue chain is DNA-directed RNA polymerase subunit beta (1075 aa).

It belongs to the RNA polymerase beta chain family. In plastids the minimal PEP RNA polymerase catalytic core is composed of four subunits: alpha, beta, beta', and beta''. When a (nuclear-encoded) sigma factor is associated with the core the holoenzyme is formed, which can initiate transcription.

It is found in the plastid. It localises to the chloroplast. The enzyme catalyses RNA(n) + a ribonucleoside 5'-triphosphate = RNA(n+1) + diphosphate. DNA-dependent RNA polymerase catalyzes the transcription of DNA into RNA using the four ribonucleoside triphosphates as substrates. This Zea mays (Maize) protein is DNA-directed RNA polymerase subunit beta.